The chain runs to 396 residues: 3-hydroxykynurenine transaminase (396 aa).

Residues 43–44 are binds to and confers specificity for 3-hydroxykynurenine; shared with dimeric partner; sequence SN. Pyridoxal 5'-phosphate-binding positions include 77-79, serine 154, and glutamine 204; that span reads SAH. Residue serine 154 participates in substrate binding. An N6-(pyridoxal phosphate)lysine modification is found at lysine 205. Tyrosine 256 and threonine 259 together coordinate pyridoxal 5'-phosphate. Arginine 356 contacts substrate.

The protein belongs to the class-V pyridoxal-phosphate-dependent aminotransferase family. In terms of assembly, homodimer. The cofactor is pyridoxal 5'-phosphate. In terms of tissue distribution, expressed in gut and ovaries.

It is found in the peroxisome. It catalyses the reaction L-kynurenine + glyoxylate = kynurenate + glycine + H2O. The enzyme catalyses 3-hydroxy-L-kynurenine + glyoxylate = xanthurenate + glycine + H2O. It carries out the reaction 3-hydroxy-L-kynurenine + pyruvate = xanthurenate + L-alanine + H2O. The catalysed reaction is glyoxylate + L-alanine = glycine + pyruvate. The protein operates within amino-acid degradation; L-kynurenine degradation; kynurenate from L-kynurenine: step 1/2. Functionally, catalyzes the pyridoxal 5'-phosphate-dependent transamination of both 3-hydroxykynurenine and L-kynurenine to xanthurenic acid and kynurenic acid, respectively, preferentially using the alpha-ketoacid glyoxylate as the amino group acceptor. Although glyoxylate is the preferred amino group acceptor, transamination of 3-hydroxykynurenine also works with pyruvate as the amino acceptor in vitro. Involved in the detoxification of cytotoxic metabolite 3-hydroxykynurenine generated by the hydroxylation of L-kynurenine, an intermediate in the tryptophan catabolism pathway. The Plasmodium parasite uses xanthurenic acid produced in the midgut to activate its gametocytes ingested during a blood meal. Also catalyzes, although with a lesser efficiency, the transamination of alanine with glyoxylate as an amino group acceptor. May play a role in the detoxification of glyoxylate, a toxic plant metabolite from the diet. The polypeptide is 3-hydroxykynurenine transaminase (Anopheles gambiae (African malaria mosquito)).